Reading from the N-terminus, the 244-residue chain is 7-cyano-7-deazaguanine synthase (244 aa).

An ATP-binding site is contributed by 14 to 24 (FSGGQDSATCV). 4 residues coordinate Zn(2+): Cys202, Cys217, Cys220, and Cys223.

It belongs to the QueC family. Requires Zn(2+) as cofactor.

It carries out the reaction 7-carboxy-7-deazaguanine + NH4(+) + ATP = 7-cyano-7-deazaguanine + ADP + phosphate + H2O + H(+). It functions in the pathway purine metabolism; 7-cyano-7-deazaguanine biosynthesis. In terms of biological role, catalyzes the ATP-dependent conversion of 7-carboxy-7-deazaguanine (CDG) to 7-cyano-7-deazaguanine (preQ(0)). This Burkholderia cenocepacia (strain HI2424) protein is 7-cyano-7-deazaguanine synthase.